The chain runs to 1374 residues: DNA-directed RNA polymerase subunit beta (1374 aa).

It belongs to the RNA polymerase beta chain family. The RNAP catalytic core consists of 2 alpha, 1 beta, 1 beta' and 1 omega subunit. When a sigma factor is associated with the core the holoenzyme is formed, which can initiate transcription.

The catalysed reaction is RNA(n) + a ribonucleoside 5'-triphosphate = RNA(n+1) + diphosphate. Its function is as follows. DNA-dependent RNA polymerase catalyzes the transcription of DNA into RNA using the four ribonucleoside triphosphates as substrates. This Methylobacterium radiotolerans (strain ATCC 27329 / DSM 1819 / JCM 2831 / NBRC 15690 / NCIMB 10815 / 0-1) protein is DNA-directed RNA polymerase subunit beta.